The chain runs to 395 residues: Zinc-regulated GTPase metalloprotein activator 1F (395 aa).

A disordered region spans residues 1-22; sequence MLPAVGSVDEEEDPAEEDCPEL. Residues 8 to 20 are compositionally biased toward acidic residues; that stretch reads VDEEEDPAEEDCP. A psi-PxLVp motif motif is present at residues 17-24; it reads EDCPELVP. 49–56 contacts GTP; the sequence is GYLGAGKT. The Zn(2+) site is built by C107, C109, and C110. The short motif at 107 to 110 is the CXCC motif element; the sequence is CLCC. GTP-binding positions include 110–114 and 203–206; these read CSVKD and NKTD. The CobW C-terminal domain occupies 274–377; that stretch reads IVTITFDVPG…ILKQLFIATV (104 aa).

Belongs to the SIMIBI class G3E GTPase family. ZNG1 subfamily.

Its subcellular location is the nucleus. The enzyme catalyses GTP + H2O = GDP + phosphate + H(+). Its function is as follows. Zinc chaperone that directly transfers zinc cofactor to target metalloproteins, thereby activating them. Catalyzes zinc insertion into the active site of methionine aminopeptidase METAP1, which function to cleave the initiator methionine from polypeptides during or after protein translation. Mechanistically, the N-terminal psi-PxLVp motif binds to the C6H2-type zinc finger of inactive form of METAP1. After formation of the docked complex, zinc is transferred from the CXCC motif in the GTPase domain of ZNG1F to the zinc binding site in the peptidase domain of METAP1 in a process requiring GTP hydrolysis. GTP/GDP exchange is required for release of active METAP1. This Homo sapiens (Human) protein is Zinc-regulated GTPase metalloprotein activator 1F.